The sequence spans 316 residues: 4-hydroxy-3-methylbut-2-enyl diphosphate reductase (316 aa).

C12 is a binding site for [4Fe-4S] cluster. (2E)-4-hydroxy-3-methylbut-2-enyl diphosphate contacts are provided by H41 and H74. Dimethylallyl diphosphate is bound by residues H41 and H74. 2 residues coordinate isopentenyl diphosphate: H41 and H74. Residue C96 coordinates [4Fe-4S] cluster. H124 is a binding site for (2E)-4-hydroxy-3-methylbut-2-enyl diphosphate. A dimethylallyl diphosphate-binding site is contributed by H124. H124 is an isopentenyl diphosphate binding site. Catalysis depends on E126, which acts as the Proton donor. T169 is a binding site for (2E)-4-hydroxy-3-methylbut-2-enyl diphosphate. C199 contacts [4Fe-4S] cluster. 4 residues coordinate (2E)-4-hydroxy-3-methylbut-2-enyl diphosphate: S227, S228, N229, and S271. Dimethylallyl diphosphate is bound by residues S227, S228, N229, and S271. S227, S228, N229, and S271 together coordinate isopentenyl diphosphate.

Belongs to the IspH family. Requires [4Fe-4S] cluster as cofactor.

It carries out the reaction isopentenyl diphosphate + 2 oxidized [2Fe-2S]-[ferredoxin] + H2O = (2E)-4-hydroxy-3-methylbut-2-enyl diphosphate + 2 reduced [2Fe-2S]-[ferredoxin] + 2 H(+). The enzyme catalyses dimethylallyl diphosphate + 2 oxidized [2Fe-2S]-[ferredoxin] + H2O = (2E)-4-hydroxy-3-methylbut-2-enyl diphosphate + 2 reduced [2Fe-2S]-[ferredoxin] + 2 H(+). It functions in the pathway isoprenoid biosynthesis; dimethylallyl diphosphate biosynthesis; dimethylallyl diphosphate from (2E)-4-hydroxy-3-methylbutenyl diphosphate: step 1/1. The protein operates within isoprenoid biosynthesis; isopentenyl diphosphate biosynthesis via DXP pathway; isopentenyl diphosphate from 1-deoxy-D-xylulose 5-phosphate: step 6/6. Its function is as follows. Catalyzes the conversion of 1-hydroxy-2-methyl-2-(E)-butenyl 4-diphosphate (HMBPP) into a mixture of isopentenyl diphosphate (IPP) and dimethylallyl diphosphate (DMAPP). Acts in the terminal step of the DOXP/MEP pathway for isoprenoid precursor biosynthesis. This Xylella fastidiosa (strain M23) protein is 4-hydroxy-3-methylbut-2-enyl diphosphate reductase.